A 315-amino-acid chain; its full sequence is Ectopic P granules protein 4 (315 aa).

6 consecutive transmembrane segments (helical) span residues 84–104, 113–133, 146–166, 190–210, 221–241, and 242–262; these read IGFL…FSFF, IGYI…ALWF, LPPP…ISAL, IVYL…FFDG, IFES…LACS, and ISSN…FFII.

The protein belongs to the EI24 family. As to expression, expressed in pharyngeal and body wall muscles and intestine cells.

Its subcellular location is the cytoplasm. The protein resides in the membrane. In terms of biological role, involved in autophagy. Thought to act in autophagasome and omegasome formation. In Caenorhabditis elegans, this protein is Ectopic P granules protein 4.